A 641-amino-acid chain; its full sequence is Macrolide export ATP-binding/permease protein MacB (641 aa).

Positions 2–236 (IFLKNICKNI…LTLKTMSKEK (235 aa)) constitute an ABC transporter domain. 34–41 (GQSGSGKT) provides a ligand contact to ATP. 4 helical membrane-spanning segments follow: residues 265-285 (ILTMLGIIIGIASVVCVVALG), 519-539 (ACVAVIALIVGGIGVMNIMLV), 571-591 (MICTIGAILGVILSIFVIFAF), and 604-624 (AYSVLLGLLSSMFIGVVFGFF).

Belongs to the ABC transporter superfamily. Macrolide exporter (TC 3.A.1.122) family. In terms of assembly, homodimer.

It localises to the cell inner membrane. Non-canonical ABC transporter that contains transmembrane domains (TMD), which form a pore in the inner membrane, and an ATP-binding domain (NBD), which is responsible for energy generation. Confers resistance against macrolides. The chain is Macrolide export ATP-binding/permease protein MacB from Campylobacter jejuni subsp. jejuni serotype O:23/36 (strain 81-176).